The primary structure comprises 1056 residues: Kinesin-like protein KIN-5A (1056 aa).

The tract at residues 1–44 (MDRRIGLTSPSPKSTEKSGRDLRSGGDANGGANTNSNSIPRGDK) is disordered. Residues 14 to 24 (STEKSGRDLRS) show a composition bias toward basic and acidic residues. In terms of domain architecture, Kinesin motor spans 49 to 395 (NVQVILRCRP…LDYAHRAKNI (347 aa)). 135-142 (GQTGTGKT) serves as a coordination point for ATP. Positions 443 to 525 (QEEAEKKAMT…STIKEKEYVI (83 aa)) form a coiled coil.

Belongs to the TRAFAC class myosin-kinesin ATPase superfamily. Kinesin family. KIN-5/BimC subfamily.

Its subcellular location is the cytoplasm. The protein resides in the cytoskeleton. It is found in the spindle. Responsible for microtubule translocation. May be important for the organization of phragmoplast-specific arrays of microtubules. Plays an essential role in stabilizing the mitotic spindle. Required during mitotic cytokinesis. The chain is Kinesin-like protein KIN-5A from Oryza sativa subsp. japonica (Rice).